Reading from the N-terminus, the 290-residue chain is Arylamine N-acetyltransferase 1 (290 aa).

M1 bears the N-acetylmethionine mark. The active-site Acyl-thioester intermediate is the C68. The CoA site is built by T103 and G104. Position 106 to 107 (106 to 107 (IH)) interacts with substrate. Active-site residues include H107 and D122. CoA is bound by residues Y208 and S214.

The protein belongs to the arylamine N-acetyltransferase family.

Its subcellular location is the cytoplasm. The enzyme catalyses an arylamine + acetyl-CoA = an N-acetylarylamine + CoA. The sequence is that of Arylamine N-acetyltransferase 1 (NAT1) from Oryctolagus cuniculus (Rabbit).